A 564-amino-acid chain; its full sequence is Membrane protein insertase YidC (564 aa).

The helical transmembrane segment at 7 to 24 (VLWVVFSFSLLMLWDNYN) threads the bilayer. Residues 43–60 (KPAAATDDGKTAAAPTAD) are compositionally biased toward low complexity. The segment at 43–76 (KPAAATDDGKTAAAPTADVPTSSAHAANATGVPD) is disordered. Helical transmembrane passes span 293 to 313 (LATNLYAVGAIMPMGAVAPGA), 341 to 361 (VKDYGWLTIIAKPIFWLMIQI), 364 to 384 (LLGNWGWTIVVLTIVIKLAFF), 438 to 458 (MPIVIQIPVFISLYWVLLASV), 483 to 503 (IGSFHLTIGILPILMAISMFI), and 524 to 544 (PIAFSLMFFFFPAGLVLYWVV).

The protein belongs to the OXA1/ALB3/YidC family. Type 1 subfamily. As to quaternary structure, interacts with the Sec translocase complex via SecD. Specifically interacts with transmembrane segments of nascent integral membrane proteins during membrane integration.

The protein localises to the cell inner membrane. In terms of biological role, required for the insertion and/or proper folding and/or complex formation of integral membrane proteins into the membrane. Involved in integration of membrane proteins that insert both dependently and independently of the Sec translocase complex, as well as at least some lipoproteins. Aids folding of multispanning membrane proteins. The protein is Membrane protein insertase YidC of Janthinobacterium sp. (strain Marseille) (Minibacterium massiliensis).